The following is a 55-amino-acid chain: Large ribosomal subunit protein eL37 (55 aa).

Residues cysteine 20, cysteine 23, cysteine 35, and cysteine 38 each coordinate Zn(2+). The C4-type zinc finger occupies 20–38 (CRRCGKNSYHKRHHRCSSC).

The protein belongs to the eukaryotic ribosomal protein eL37 family. The cofactor is Zn(2+).

In terms of biological role, binds to the 23S rRNA. The chain is Large ribosomal subunit protein eL37 from Cenarchaeum symbiosum (strain A).